The following is a 245-amino-acid chain: Mannose/glucose-specific lectin (245 aa).

2 residues coordinate a carbohydrate: Asp-87 and Gly-107. The N-linked (GlcNAc...) asparagine glycan is linked to Asn-119. Glu-129 and Asp-131 together coordinate Mn(2+). Residues Asp-131 and Phe-133 each coordinate Ca(2+). 2 residues coordinate a carbohydrate: Ser-138 and Asn-139. Ca(2+) contacts are provided by Asn-139 and Asp-142. Mn(2+) is bound by residues Asp-142 and His-147. A carbohydrate-binding residues include Gly-221, Glu-222, and Gln-223.

It belongs to the leguminous lectin family. Homodimer.

In terms of biological role, mannose/glucose-specific lectin that also binds derivatives N-acetyl-D-glucosamine and alpha-methyl-D-mannopyranoside with even higher affinity. Has hemagglutinating activity towards rabbit erythrocytes. Is toxic towards brine shrimp A.nauplii. In rats, induces dose-dependent paw edema. The polypeptide is Mannose/glucose-specific lectin (Centrolobium tomentosum (Arariba)).